The following is a 185-amino-acid chain: Large ribosomal subunit protein uL5c (185 aa).

It belongs to the universal ribosomal protein uL5 family. As to quaternary structure, part of the 50S ribosomal subunit; contacts the 5S rRNA.

It is found in the plastid. The protein localises to the chloroplast. In terms of biological role, binds 5S rRNA, forms part of the central protuberance of the 50S subunit. The chain is Large ribosomal subunit protein uL5c (rpl5) from Chlorokybus atmophyticus (Soil alga).